Reading from the N-terminus, the 129-residue chain is Small ribosomal subunit protein uS11 (129 aa).

Belongs to the universal ribosomal protein uS11 family. Part of the 30S ribosomal subunit. Interacts with proteins S7 and S18. Binds to IF-3.

In terms of biological role, located on the platform of the 30S subunit, it bridges several disparate RNA helices of the 16S rRNA. Forms part of the Shine-Dalgarno cleft in the 70S ribosome. The protein is Small ribosomal subunit protein uS11 of Francisella tularensis subsp. tularensis (strain FSC 198).